A 144-amino-acid polypeptide reads, in one-letter code: UPF0306 protein Spro_0510 (144 aa).

It belongs to the UPF0306 family.

This chain is UPF0306 protein Spro_0510, found in Serratia proteamaculans (strain 568).